The sequence spans 510 residues: Lysine--tRNA ligase (510 aa).

Residues glutamate 420 and glutamate 427 each contribute to the Mg(2+) site.

It belongs to the class-II aminoacyl-tRNA synthetase family. Homodimer. It depends on Mg(2+) as a cofactor.

It is found in the cytoplasm. It carries out the reaction tRNA(Lys) + L-lysine + ATP = L-lysyl-tRNA(Lys) + AMP + diphosphate. The sequence is that of Lysine--tRNA ligase from Vibrio campbellii (strain ATCC BAA-1116).